We begin with the raw amino-acid sequence, 141 residues long: Large ribosomal subunit protein uL14 (141 aa).

Belongs to the universal ribosomal protein uL14 family. As to quaternary structure, part of the 50S ribosomal subunit. Forms a cluster with proteins L3 and L24e, part of which may contact the 16S rRNA in 2 intersubunit bridges.

Functionally, binds to 23S rRNA. Forms part of two intersubunit bridges in the 70S ribosome. This chain is Large ribosomal subunit protein uL14, found in Thermofilum pendens (strain DSM 2475 / Hrk 5).